A 364-amino-acid polypeptide reads, in one-letter code: S-adenosylmethionine:tRNA ribosyltransferase-isomerase (364 aa).

This sequence belongs to the QueA family. As to quaternary structure, monomer.

Its subcellular location is the cytoplasm. The catalysed reaction is 7-aminomethyl-7-carbaguanosine(34) in tRNA + S-adenosyl-L-methionine = epoxyqueuosine(34) in tRNA + adenine + L-methionine + 2 H(+). Its pathway is tRNA modification; tRNA-queuosine biosynthesis. Its function is as follows. Transfers and isomerizes the ribose moiety from AdoMet to the 7-aminomethyl group of 7-deazaguanine (preQ1-tRNA) to give epoxyqueuosine (oQ-tRNA). This Bradyrhizobium sp. (strain BTAi1 / ATCC BAA-1182) protein is S-adenosylmethionine:tRNA ribosyltransferase-isomerase.